Here is a 514-residue protein sequence, read N- to C-terminus: tRNA-2-methylthio-N(6)-dimethylallyladenosine synthase (514 aa).

The segment at 1 to 21 is disordered; the sequence is MNEEQRKASSVDVLAERDKKA. One can recognise an MTTase N-terminal domain in the interval 68–186; the sequence is RTFLIKTYGC…LPEILEEAYL (119 aa). [4Fe-4S] cluster contacts are provided by Cys-77, Cys-113, Cys-147, Cys-223, Cys-227, and Cys-230. Residues 209 to 440 enclose the Radical SAM core domain; it reads REGNIKAWVN…KKVGHYSQIA (232 aa). Positions 442–505 constitute a TRAM domain; it reads SKYEGQTVTV…QYSLNGSFVK (64 aa).

This sequence belongs to the methylthiotransferase family. MiaB subfamily. In terms of assembly, monomer. It depends on [4Fe-4S] cluster as a cofactor.

The protein resides in the cytoplasm. It carries out the reaction N(6)-dimethylallyladenosine(37) in tRNA + (sulfur carrier)-SH + AH2 + 2 S-adenosyl-L-methionine = 2-methylsulfanyl-N(6)-dimethylallyladenosine(37) in tRNA + (sulfur carrier)-H + 5'-deoxyadenosine + L-methionine + A + S-adenosyl-L-homocysteine + 2 H(+). In terms of biological role, catalyzes the methylthiolation of N6-(dimethylallyl)adenosine (i(6)A), leading to the formation of 2-methylthio-N6-(dimethylallyl)adenosine (ms(2)i(6)A) at position 37 in tRNAs that read codons beginning with uridine. The protein is tRNA-2-methylthio-N(6)-dimethylallyladenosine synthase of Staphylococcus aureus (strain MRSA252).